The chain runs to 165 residues: Lipoprotein signal peptidase (165 aa).

A run of 3 helical transmembrane segments spans residues 6–26 (SSVEIGDSMIYIFLFLILLII), 68–88 (GKIDIVSILAVIAIGLILFYF), and 95–115 (ISFLERIAYTMIFSGAIGNMI). Residues aspartate 125 and aspartate 141 contribute to the active site. A helical membrane pass occupies residues 132–152 (IWSFIFNFADVWINIGVVLII).

It belongs to the peptidase A8 family.

The protein localises to the cell inner membrane. The catalysed reaction is Release of signal peptides from bacterial membrane prolipoproteins. Hydrolyzes -Xaa-Yaa-Zaa-|-(S,diacylglyceryl)Cys-, in which Xaa is hydrophobic (preferably Leu), and Yaa (Ala or Ser) and Zaa (Gly or Ala) have small, neutral side chains.. It participates in protein modification; lipoprotein biosynthesis (signal peptide cleavage). This protein specifically catalyzes the removal of signal peptides from prolipoproteins. In Fusobacterium nucleatum subsp. nucleatum (strain ATCC 25586 / DSM 15643 / BCRC 10681 / CIP 101130 / JCM 8532 / KCTC 2640 / LMG 13131 / VPI 4355), this protein is Lipoprotein signal peptidase.